The chain runs to 540 residues: NADH-ubiquinone oxidoreductase chain 4 (540 aa).

Helical transmembrane passes span 2 to 22 (TIIA…GVIL), 35 to 55 (IFIL…LIGC), 89 to 109 (ISAI…LISI), 118 to 138 (QKFQ…FAAT), 140 to 160 (LVQL…MIGV), 172 to 192 (FQIL…IGIL), 218 to 238 (LIFI…PLHL), 248 to 268 (PTAG…YGYI), 282 to 302 (YFPI…IATL), 310 to 330 (IVAY…FSGV), 338 to 358 (IILM…IGVI), 376 to 396 (VMPI…AFPI), 415 to 435 (IIIA…SFWL), and 501 to 521 (VNIF…IIGM).

It belongs to the complex I subunit 4 family.

It localises to the mitochondrion membrane. The enzyme catalyses a ubiquinone + NADH + 5 H(+)(in) = a ubiquinol + NAD(+) + 4 H(+)(out). Its function is as follows. Core subunit of the mitochondrial membrane respiratory chain NADH dehydrogenase (Complex I) that is believed to belong to the minimal assembly required for catalysis. Complex I functions in the transfer of electrons from NADH to the respiratory chain. The immediate electron acceptor for the enzyme is believed to be ubiquinone. This is NADH-ubiquinone oxidoreductase chain 4 (nad4) from Dictyostelium discoideum (Social amoeba).